The primary structure comprises 459 residues: Ribulose bisphosphate carboxylase large chain (459 aa).

Lysine 4 bears the N6,N6,N6-trimethyllysine mark. The substrate site is built by asparagine 113 and threonine 163. Lysine 165 serves as the catalytic Proton acceptor. Lysine 167 contributes to the substrate binding site. Lysine 191, aspartate 193, and glutamate 194 together coordinate Mg(2+). Lysine 191 is subject to N6-carboxylysine. The active-site Proton acceptor is the histidine 284. Substrate is bound by residues arginine 285, histidine 317, and serine 369.

It belongs to the RuBisCO large chain family. Type I subfamily. As to quaternary structure, heterohexadecamer of 8 large chains and 8 small chains; disulfide-linked. The disulfide link is formed within the large subunit homodimers. Requires Mg(2+) as cofactor. The disulfide bond which can form in the large chain dimeric partners within the hexadecamer appears to be associated with oxidative stress and protein turnover.

It localises to the plastid. It is found in the chloroplast. It carries out the reaction 2 (2R)-3-phosphoglycerate + 2 H(+) = D-ribulose 1,5-bisphosphate + CO2 + H2O. The catalysed reaction is D-ribulose 1,5-bisphosphate + O2 = 2-phosphoglycolate + (2R)-3-phosphoglycerate + 2 H(+). Functionally, ruBisCO catalyzes two reactions: the carboxylation of D-ribulose 1,5-bisphosphate, the primary event in carbon dioxide fixation, as well as the oxidative fragmentation of the pentose substrate in the photorespiration process. Both reactions occur simultaneously and in competition at the same active site. The polypeptide is Ribulose bisphosphate carboxylase large chain (Nypa fruticans (Nypa palm)).